A 248-amino-acid chain; its full sequence is Leucyl/phenylalanyl-tRNA--protein transferase (248 aa).

The protein belongs to the L/F-transferase family.

It is found in the cytoplasm. The catalysed reaction is N-terminal L-lysyl-[protein] + L-leucyl-tRNA(Leu) = N-terminal L-leucyl-L-lysyl-[protein] + tRNA(Leu) + H(+). The enzyme catalyses N-terminal L-arginyl-[protein] + L-leucyl-tRNA(Leu) = N-terminal L-leucyl-L-arginyl-[protein] + tRNA(Leu) + H(+). It catalyses the reaction L-phenylalanyl-tRNA(Phe) + an N-terminal L-alpha-aminoacyl-[protein] = an N-terminal L-phenylalanyl-L-alpha-aminoacyl-[protein] + tRNA(Phe). Its function is as follows. Functions in the N-end rule pathway of protein degradation where it conjugates Leu, Phe and, less efficiently, Met from aminoacyl-tRNAs to the N-termini of proteins containing an N-terminal arginine or lysine. In Ralstonia pickettii (strain 12J), this protein is Leucyl/phenylalanyl-tRNA--protein transferase.